The following is a 463-amino-acid chain: uncharacterized protein (463 aa).

The protein belongs to the mycobacterial PPE family.

This is an uncharacterized protein from Mycobacterium tuberculosis (strain ATCC 25618 / H37Rv).